Consider the following 234-residue polypeptide: STARD3 N-terminal-like protein (234 aa).

Residue methionine 1 is modified to N-acetylmethionine. At 1–53 (MNHLPEDMENALTGSQSSHASLRNIHSINPTQLMARIESYEGREKKGISDVRR) the chain is on the cytoplasmic side. Serine 15, serine 21, and serine 27 each carry phosphoserine. One can recognise an MENTAL domain in the interval 48–218 (ISDVRRTFCL…YSPPESEAGS (171 aa)). The chain crosses the membrane as a helical span at residues 54-74 (TFCLFVTFDLLFVTLLWIIEL). Residues 75–97 (NVNGGIENTLEKEVMQYDYYSSY) are Extracellular-facing. The helical transmembrane segment at 98–118 (FDIFLLAVFRFKVLILAYAVC) threads the bilayer. At 119-122 (RLRH) the chain is on the cytoplasmic side. Residues 123–143 (WWAIALTTAVTSAFLLAKVIL) form a helical membrane-spanning segment. Residues 144-150 (SKLFSQG) lie on the Extracellular side of the membrane. Residues 151-171 (AFGYVLPIISFILAWIETWFL) traverse the membrane as a helical segment. The Cytoplasmic segment spans residues 172-234 (DFKVLPQEAE…QDSEKPLLEL (63 aa)). Residue serine 193 is modified to Phosphoserine. Residues 200–234 (PGGLSDGQFYSPPESEAGSEEAEEKQDSEKPLLEL) form a disordered region. The FFAT motif lies at 208 to 213 (FYSPPE). Positions 224–234 (KQDSEKPLLEL) are enriched in basic and acidic residues.

This sequence belongs to the STARD3 family. As to quaternary structure, homodimer. Interacts (via the MENTAL domain) with STARD3NL. Interacts (via FFAT motif) with VAPA. Interacts (via FFAT motif) with VAPB. Interacts (via FFAT motif) with MOSPD2 (via MSP domain).

It is found in the late endosome membrane. In terms of biological role, tethering protein that creates contact site between the endoplasmic reticulum and late endosomes: localizes to late endosome membranes and contacts the endoplasmic reticulum via interaction with VAPA and VAPB. In Homo sapiens (Human), this protein is STARD3 N-terminal-like protein.